We begin with the raw amino-acid sequence, 109 residues long: UPF0154 protein UPA3_0273 (109 aa).

Residues 42-62 (VGLGIGIVLFLIAGLIIGYFI) form a helical membrane-spanning segment.

This sequence belongs to the UPF0154 family.

The protein localises to the cell membrane. This chain is UPF0154 protein UPA3_0273, found in Ureaplasma parvum serovar 3 (strain ATCC 27815 / 27 / NCTC 11736).